A 487-amino-acid chain; its full sequence is Wax ester synthase/diacylglycerol acyltransferase 3 (487 aa).

At 1-193 the chain is on the cytoplasmic side; that stretch reads MYTMKKGKDM…KHASSNKKSW (193 aa). His-151 acts as the Proton acceptor in catalysis. Residues 194–214 form a helical membrane-spanning segment; that stretch reads WLVGRFWFMIRIIFTTVVELF. Residues 215–487 lie on the Lumenal side of the membrane; that stretch reads KYLLTLCFMR…MEKGVHKMEV (273 aa).

In the N-terminal section; belongs to the long-chain O-acyltransferase family. In terms of tissue distribution, mostly expressed in flowers and siliques.

The protein resides in the cell membrane. It localises to the endoplasmic reticulum membrane. It carries out the reaction an acyl-CoA + a 1,2-diacyl-sn-glycerol = a triacyl-sn-glycerol + CoA. The catalysed reaction is a long chain fatty alcohol + a fatty acyl-CoA = a wax ester + CoA. The protein operates within glycerolipid metabolism; triacylglycerol biosynthesis. Its pathway is lipid metabolism. Its function is as follows. Bifunctional wax ester synthase/diacylglycerol acyltransferase. Involved in cuticular wax biosynthesis. The chain is Wax ester synthase/diacylglycerol acyltransferase 3 from Arabidopsis thaliana (Mouse-ear cress).